Here is a 1362-residue protein sequence, read N- to C-terminus: ATP-dependent RNA helicase dhx29 (1362 aa).

Positions Met1–His10 are enriched in basic residues. The disordered stretch occupies residues Met1–Ser76. Positions Gly18 to Arg27 are enriched in low complexity. Residues Ala28–Lys41 show a composition bias toward basic and acidic residues. A compositionally biased stretch (low complexity) spans Ser66–Ser76. Positions Glu89–Asn109 form a coiled coil. Disordered regions lie at residues Gln182 to Asn215 and Glu229 to Glu257. Residues Gly231–Lys242 show a composition bias toward acidic residues. The span at Glu243 to Glu257 shows a compositional bias: basic and acidic residues. Residues Gln285–His305 adopt a coiled-coil conformation. A disordered region spans residues Val317–Leu336. The region spanning Leu576–Ser749 is the Helicase ATP-binding domain. An ATP-binding site is contributed by Gly589–Ser596. The DEAH box signature appears at Asp696–His699. The region spanning Asp852–Asp1021 is the Helicase C-terminal domain.

It belongs to the DEAD box helicase family. DEAH subfamily. As to quaternary structure, part of the 43S pre-initiation complex (PIC).

It is found in the cytoplasm. The enzyme catalyses ATP + H2O = ADP + phosphate + H(+). In terms of biological role, ATP-binding RNA helicase involved in translation initiation. Part of the 43S pre-initiation complex that is required for efficient initiation on mRNAs of higher eukaryotes with structured 5'-UTRs by promoting efficient NTPase-dependent 48S complex formation. Specifically binds to the 40S ribosome near the mRNA entrance. Does not possess a processive helicase activity. The sequence is that of ATP-dependent RNA helicase dhx29 from Xenopus laevis (African clawed frog).